The following is a 205-amino-acid chain: Small ribosomal subunit protein uS4 (205 aa).

Residues 14-49 (RMGENIWGRPKSPVNRREYGPGQHGQRRKGKMSDFG) form a disordered region. One can recognise an S4 RNA-binding domain in the interval 94–157 (SRLDAIVYRA…KQLVTVLEAV (64 aa)).

The protein belongs to the universal ribosomal protein uS4 family. As to quaternary structure, part of the 30S ribosomal subunit. Contacts protein S5. The interaction surface between S4 and S5 is involved in control of translational fidelity.

One of the primary rRNA binding proteins, it binds directly to 16S rRNA where it nucleates assembly of the body of the 30S subunit. Its function is as follows. With S5 and S12 plays an important role in translational accuracy. This is Small ribosomal subunit protein uS4 from Agrobacterium fabrum (strain C58 / ATCC 33970) (Agrobacterium tumefaciens (strain C58)).